A 497-amino-acid polypeptide reads, in one-letter code: Probable pyruvate kinase, cytosolic isozyme (497 aa).

Residue Arg37 coordinates substrate. K(+) is bound by residues Asn39, Ser41, Asp71, and Thr72. Residue 39-42 (NFSH) coordinates ATP. 2 residues coordinate ATP: Arg78 and Lys163. Lys227 serves as a coordination point for substrate. Glu229 is a Mg(2+) binding site. Residues Gly252, Asp253, and Thr285 each contribute to the substrate site. Asp253 contacts Mg(2+).

It belongs to the pyruvate kinase family. Homotetramer. The cofactor is Mg(2+). K(+) is required as a cofactor.

The protein resides in the cytoplasm. It is found in the cytosol. The enzyme catalyses pyruvate + ATP = phosphoenolpyruvate + ADP + H(+). It participates in carbohydrate degradation; glycolysis; pyruvate from D-glyceraldehyde 3-phosphate: step 5/5. Its function is as follows. Key regulatory enzyme of the glycolytic pathway that catalyzes the final step of glycolysis, converting ADP and phosphoenolpyruvate (PEP) to ATP and pyruvate by essentially irreversible transphosphorylation. In Arabidopsis thaliana (Mouse-ear cress), this protein is Probable pyruvate kinase, cytosolic isozyme.